We begin with the raw amino-acid sequence, 179 residues long: CASP-like protein 5A2 (179 aa).

A disordered region spans residues 1–24 (MNVSHASVHPVEDPPAAATEVENP). Over 1–38 (MNVSHASVHPVEDPPAAATEVENPPRVRMDDMEGMPGT) the chain is Cytoplasmic. Residues 39 to 59 (LLGLALRFFQFLFAAAALCVM) traverse the membrane as a helical segment. The Extracellular portion of the chain corresponds to 60–70 (ASTSDFPSVTA). Residues 71-91 (FCYLVAATGLQSLWSLALAMV) form a helical membrane-spanning segment. At 92 to 115 (DVYAIMVKRSLQNRRLVSLFAIGD) the chain is on the cytoplasmic side. Residues 116 to 136 (GVTSTLTFAAACASAGITVLI) traverse the membrane as a helical segment. Residues 137–155 (DNDLNSCAQNHCVQFETST) lie on the Extracellular side of the membrane. Residues 156–176 (ALAFISWFAALPSFLFNFWSL) form a helical membrane-spanning segment. Residues 177–179 (ASR) lie on the Cytoplasmic side of the membrane.

It belongs to the Casparian strip membrane proteins (CASP) family. In terms of assembly, homodimer and heterodimers.

Its subcellular location is the cell membrane. This chain is CASP-like protein 5A2, found in Arabidopsis thaliana (Mouse-ear cress).